The primary structure comprises 543 residues: 2,3-bisphosphoglycerate-independent phosphoglycerate mutase (543 aa).

Positions 20 and 73 each coordinate Mn(2+). Serine 73 functions as the Phosphoserine intermediate in the catalytic mechanism. Residues histidine 134, 166-167 (RD), arginine 198, arginine 204, 278-281 (RGDR), and lysine 360 contribute to the substrate site. Residues aspartate 428, histidine 432, aspartate 469, histidine 470, and histidine 488 each contribute to the Mn(2+) site.

The protein belongs to the BPG-independent phosphoglycerate mutase family. Monomer. The cofactor is Mn(2+).

The catalysed reaction is (2R)-2-phosphoglycerate = (2R)-3-phosphoglycerate. It participates in carbohydrate degradation; glycolysis; pyruvate from D-glyceraldehyde 3-phosphate: step 3/5. Catalyzes the interconversion of 2-phosphoglycerate and 3-phosphoglycerate. The protein is 2,3-bisphosphoglycerate-independent phosphoglycerate mutase of Rhodopirellula baltica (strain DSM 10527 / NCIMB 13988 / SH1).